The chain runs to 468 residues: Mitochondrial dynamics protein MID51 (468 aa).

Over 1-29 the chain is Mitochondrial intermembrane; sequence MAGVNGDRKGKKDDNGLGTAIDFVLSNAK. Residues 30-47 form a helical membrane-spanning segment; it reads LVLGVGGAAMLGIATLAV. The Cytoplasmic segment spans residues 48–468; it reads KRMYDRALSA…SDPESLLRTV (421 aa). The segment at 50–196 is dimerization; that stretch reads MYDRALSAPS…LSGSLYDDLQ (147 aa). The tract at residues 56–123 is disordered; that stretch reads SAPSSPTKAD…RGLARGGRPA (68 aa). A compositionally biased stretch (polar residues) spans 91-108; that stretch reads QNVSRSLQTLPTSSSSFK. The segment at 161–170 is important for interaction with DNM1L; the sequence is AALDICAELR. 3 residues coordinate ADP: serine 188, serine 190, and histidine 202. The important for interaction with DNM1L stretch occupies residues 235 to 244; sequence RRENLEYFPR. Residues serine 344, arginine 346, and lysine 372 each coordinate ADP.

The protein belongs to the MID49/MID51 family. In terms of assembly, homodimer.

It localises to the mitochondrion outer membrane. Its function is as follows. Mitochondrial outer membrane protein which regulates mitochondrial fission/fusion dynamics. Promotes the recruitment and association of the fission mediator dynamin-related protein 1 (DNM1L) to the mitochondrial surface independently of the mitochondrial fission FIS1 and MFF proteins. Regulates DNM1L GTPase activity and DNM1L oligomerization. This is Mitochondrial dynamics protein MID51 (mief1) from Danio rerio (Zebrafish).